The following is a 131-amino-acid chain: Methylated-DNA--protein-cysteine methyltransferase (131 aa).

Catalysis depends on Cys98, which acts as the Nucleophile; methyl group acceptor.

Belongs to the MGMT family.

It is found in the cytoplasm. It carries out the reaction a 6-O-methyl-2'-deoxyguanosine in DNA + L-cysteinyl-[protein] = S-methyl-L-cysteinyl-[protein] + a 2'-deoxyguanosine in DNA. The catalysed reaction is a 4-O-methyl-thymidine in DNA + L-cysteinyl-[protein] = a thymidine in DNA + S-methyl-L-cysteinyl-[protein]. In terms of biological role, involved in the cellular defense against the biological effects of O6-methylguanine (O6-MeG) and O4-methylthymine (O4-MeT) in DNA. Repairs the methylated nucleobase in DNA by stoichiometrically transferring the methyl group to a cysteine residue in the enzyme. This is a suicide reaction: the enzyme is irreversibly inactivated. The protein is Methylated-DNA--protein-cysteine methyltransferase (ogt) of Methanopyrus kandleri (strain AV19 / DSM 6324 / JCM 9639 / NBRC 100938).